Consider the following 103-residue polypeptide: Small ribosomal subunit protein uS10 (103 aa).

Belongs to the universal ribosomal protein uS10 family. As to quaternary structure, part of the 30S ribosomal subunit.

Involved in the binding of tRNA to the ribosomes. This chain is Small ribosomal subunit protein uS10, found in Xylella fastidiosa (strain 9a5c).